The chain runs to 203 residues: NAD(P)H dehydrogenase (quinone) (203 aa).

The Flavodoxin-like domain maps to 3–194 (VLIPFYSMYG…AGARYQGKYI (192 aa)). Residues 9-14 (SMYGHI) and 82-84 (TRF) contribute to the FMN site. Y11 lines the NAD(+) pocket. W102 is a binding site for substrate. Residues 117–123 (SSATQHG) and H138 each bind FMN.

The protein belongs to the WrbA family. Requires FMN as cofactor.

The enzyme catalyses a quinone + NADH + H(+) = a quinol + NAD(+). It catalyses the reaction a quinone + NADPH + H(+) = a quinol + NADP(+). This is NAD(P)H dehydrogenase (quinone) from Geobacter metallireducens (strain ATCC 53774 / DSM 7210 / GS-15).